Here is a 744-residue protein sequence, read N- to C-terminus: Putative pre-mRNA-splicing factor ATP-dependent RNA helicase DHX32 (744 aa).

At M1 the chain carries N-acetylmethionine. The disordered stretch occupies residues M1–D28. A Helicase ATP-binding domain is found at M72–G270. Residue G85–S92 coordinates ATP. Residues D185–H188 carry the DEAH box motif. Residues S258–D438 enclose the Helicase C-terminal domain.

It belongs to the DEAD box helicase family. DEAH subfamily.

It is found in the nucleus. Its subcellular location is the mitochondrion. The enzyme catalyses ATP + H2O = ADP + phosphate + H(+). The polypeptide is Putative pre-mRNA-splicing factor ATP-dependent RNA helicase DHX32 (Dhx32) (Mus musculus (Mouse)).